The following is a 236-amino-acid chain: 5'-methylthioadenosine/S-adenosylhomocysteine nucleosidase (236 aa).

Glu-12 functions as the Proton acceptor in the catalytic mechanism. Residues Gly-78, Met-153, and 174-175 (ME) each bind substrate. Asp-198 serves as the catalytic Proton donor.

It belongs to the PNP/UDP phosphorylase family. MtnN subfamily.

The enzyme catalyses S-adenosyl-L-homocysteine + H2O = S-(5-deoxy-D-ribos-5-yl)-L-homocysteine + adenine. It catalyses the reaction S-methyl-5'-thioadenosine + H2O = 5-(methylsulfanyl)-D-ribose + adenine. It carries out the reaction 5'-deoxyadenosine + H2O = 5-deoxy-D-ribose + adenine. Its pathway is amino-acid biosynthesis; L-methionine biosynthesis via salvage pathway; S-methyl-5-thio-alpha-D-ribose 1-phosphate from S-methyl-5'-thioadenosine (hydrolase route): step 1/2. Catalyzes the irreversible cleavage of the glycosidic bond in both 5'-methylthioadenosine (MTA) and S-adenosylhomocysteine (SAH/AdoHcy) to adenine and the corresponding thioribose, 5'-methylthioribose and S-ribosylhomocysteine, respectively. Also cleaves 5'-deoxyadenosine, a toxic by-product of radical S-adenosylmethionine (SAM) enzymes, into 5-deoxyribose and adenine. This chain is 5'-methylthioadenosine/S-adenosylhomocysteine nucleosidase, found in Geobacillus thermodenitrificans (strain NG80-2).